The sequence spans 306 residues: Agmatinase (306 aa).

Mn(2+)-binding residues include His126, Asp149, His151, Asp153, Asp230, and Asp232.

The protein belongs to the arginase family. Agmatinase subfamily. It depends on Mn(2+) as a cofactor.

The catalysed reaction is agmatine + H2O = urea + putrescine. It functions in the pathway amine and polyamine biosynthesis; putrescine biosynthesis via agmatine pathway; putrescine from agmatine: step 1/1. Catalyzes the formation of putrescine from agmatine. The chain is Agmatinase from Escherichia coli (strain SE11).